The following is a 462-amino-acid chain: Putative amidase AmiB2 (462 aa).

Catalysis depends on charge relay system residues K81 and S155. The Acyl-ester intermediate role is filled by S179.

The protein belongs to the amidase family.

It carries out the reaction a monocarboxylic acid amide + H2O = a monocarboxylate + NH4(+). The protein is Putative amidase AmiB2 (amiB2) of Mycobacterium bovis (strain ATCC BAA-935 / AF2122/97).